Here is a 244-residue protein sequence, read N- to C-terminus: 5-oxoprolinase subunit A (244 aa).

Belongs to the LamB/PxpA family. As to quaternary structure, forms a complex composed of PxpA, PxpB and PxpC.

It catalyses the reaction 5-oxo-L-proline + ATP + 2 H2O = L-glutamate + ADP + phosphate + H(+). Catalyzes the cleavage of 5-oxoproline to form L-glutamate coupled to the hydrolysis of ATP to ADP and inorganic phosphate. This is 5-oxoprolinase subunit A from Shigella boydii serotype 18 (strain CDC 3083-94 / BS512).